A 490-amino-acid polypeptide reads, in one-letter code: Tektin-3 (490 aa).

O-linked (GalNAc...) threonine glycosylation is found at threonine 7 and threonine 9. Residues asparagine 41, asparagine 86, asparagine 111, and asparagine 276 are each glycosylated (N-linked (GlcNAc...) asparagine). A coiled-coil region spans residues 419 to 456 (RLVNEVYEVDETIQTLQQRLRDSEDTLQSLAHTKATLE).

The protein belongs to the tektin family. In terms of assembly, microtubule inner protein component of sperm flagellar doublet microtubules. Interacts with TEKT1, TEKT2, TEKT4 and TEKT5. Interacts with CCDC38. Post-translationally, N- and O-glycosylated. May be proteolytically processed during the epididymal transit of spermatozoa. In terms of processing, ubiquitinated, leading to its degradation. Deubiquitinated by USP16, promoting its stability. In terms of tissue distribution, expressed in epididymal sperm (at protein level).

Its subcellular location is the cytoplasm. The protein resides in the cytoskeleton. It localises to the cilium axoneme. The protein localises to the flagellum axoneme. It is found in the cytoplasmic vesicle. Its subcellular location is the secretory vesicle. The protein resides in the acrosome outer membrane. Its function is as follows. Microtubule inner protein (MIP) part of the dynein-decorated doublet microtubules (DMTs) in cilia and flagellar axoneme. Forms filamentous polymers in the walls of ciliary and flagellar microtubules. Required for normal sperm mobility. The polypeptide is Tektin-3 (Tekt3) (Rattus norvegicus (Rat)).